We begin with the raw amino-acid sequence, 65 residues long: U15-hexatoxin-Mg1b (65 aa).

In terms of processing, contains 4 disulfide bonds. Expressed by the venom gland.

Its subcellular location is the secreted. In vivo, intrathorax injection into crickets causes death. This is U15-hexatoxin-Mg1b from Macrothele gigas (Japanese funnel web spider).